The following is a 519-amino-acid chain: Chaperone SurA (519 aa).

Residues 1 to 31 (MMRSLHSLRRMSGTVLALMLAAGLPLSAAQA) form the signal peptide. Low complexity-rich tracts occupy residues 31 to 45 (AQPA…QKPA) and 197 to 207 (PAAAQATRAPA). Disordered stretches follow at residues 31–50 (AQPA…PAPS) and 196–221 (NPAA…PAQS). The PpiC 1 domain maps to 223–324 (PAMLVLAQIL…NGFHILKVVD (102 aa)). The disordered stretch occupies residues 328–361 (GGQPAQAARPAPAPAPQQPSSFQEGPSVAAPQGP). In terms of domain architecture, PpiC 2 spans 364–463 (VTQTHARHIL…FGWHLIQVLE (100 aa)).

The protein resides in the periplasm. It carries out the reaction [protein]-peptidylproline (omega=180) = [protein]-peptidylproline (omega=0). Its function is as follows. Chaperone involved in the correct folding and assembly of outer membrane proteins. Recognizes specific patterns of aromatic residues and the orientation of their side chains, which are found more frequently in integral outer membrane proteins. May act in both early periplasmic and late outer membrane-associated steps of protein maturation. The chain is Chaperone SurA from Bordetella bronchiseptica (strain ATCC BAA-588 / NCTC 13252 / RB50) (Alcaligenes bronchisepticus).